The sequence spans 234 residues: Proteasome subunit alpha (234 aa).

The protein belongs to the peptidase T1A family. In terms of assembly, the 20S proteasome core is composed of 14 alpha and 14 beta subunits that assemble into four stacked heptameric rings, resulting in a barrel-shaped structure. The two inner rings, each composed of seven catalytic beta subunits, are sandwiched by two outer rings, each composed of seven alpha subunits. The catalytic chamber with the active sites is on the inside of the barrel. Has a gated structure, the ends of the cylinder being occluded by the N-termini of the alpha-subunits. Is capped by the proteasome-associated ATPase, ARC.

The protein localises to the cytoplasm. It participates in protein degradation; proteasomal Pup-dependent pathway. With respect to regulation, the formation of the proteasomal ATPase ARC-20S proteasome complex, likely via the docking of the C-termini of ARC into the intersubunit pockets in the alpha-rings, may trigger opening of the gate for substrate entry. Interconversion between the open-gate and close-gate conformations leads to a dynamic regulation of the 20S proteasome proteolysis activity. Functionally, component of the proteasome core, a large protease complex with broad specificity involved in protein degradation. In Acidothermus cellulolyticus (strain ATCC 43068 / DSM 8971 / 11B), this protein is Proteasome subunit alpha.